The sequence spans 88 residues: Electron transfer flavoprotein regulatory factor 1 (88 aa).

This sequence belongs to the complex I LYR family. In terms of assembly, homotetramer. Interacts with NDUFAB1. Interacts with ETFA. Interacts with ETFB.

The protein resides in the mitochondrion. Functionally, acts as a regulator of the electron transfer flavoprotein by promoting the removal of flavin from the ETF holoenzyme (composed of ETFA and ETFB). The polypeptide is Electron transfer flavoprotein regulatory factor 1 (Bos taurus (Bovine)).